Here is a 401-residue protein sequence, read N- to C-terminus: MTQITNVSLRRILDSRGNPTVEADVLTQSGGFGRAAAPSGASTGEYEAIELDPAEAIASARDHVAPRLIDTVHAGNQREVDAALHAADGTDNFSQIGANSAVAISMAAAKAGADVLGAPVYQHLGGTFRGESFPTPLGNVVGGGEHAKEATHIQEFLSAPIGAPNVSEAVFANAAVHARVSEILDERGIPAAKGDEGAWAPPISDAEAFSLVNDAVADVEDDLGFEIRFGLDMAAAELYDDDVGGYVYGDEVKSTTEQVEYVAEMIAEYNLVYVEDPLDENDYDGFATLTERVGDQTLICGDDLFVTSVERLQTGIDADAANSILIKPNQIGTLTDAFDAIELAREHGYETVVSHRSGETEDVTIAHLAVATDAGFIKTGTVQGERTAKLNELIRIAEDAV.

Gln154 contacts (2R)-2-phosphoglycerate. The Proton donor role is filled by Glu196. The Mg(2+) site is built by Asp232, Glu275, and Asp302. 4 residues coordinate (2R)-2-phosphoglycerate: Lys327, Arg356, Ser357, and Lys378. Lys327 serves as the catalytic Proton acceptor.

It belongs to the enolase family. Mg(2+) is required as a cofactor.

Its subcellular location is the cytoplasm. It is found in the secreted. The protein resides in the cell surface. The enzyme catalyses (2R)-2-phosphoglycerate = phosphoenolpyruvate + H2O. The protein operates within carbohydrate degradation; glycolysis; pyruvate from D-glyceraldehyde 3-phosphate: step 4/5. Functionally, catalyzes the reversible conversion of 2-phosphoglycerate (2-PG) into phosphoenolpyruvate (PEP). It is essential for the degradation of carbohydrates via glycolysis. The protein is Enolase of Haloquadratum walsbyi (strain DSM 16790 / HBSQ001).